The chain runs to 489 residues: Cobyric acid synthase (489 aa).

Residues 254–442 form the GATase cobBQ-type domain; the sequence is ARVIAVPVLP…VHGLFADDRQ (189 aa). Catalysis depends on C336, which acts as the Nucleophile. H434 is a catalytic residue.

It belongs to the CobB/CobQ family. CobQ subfamily.

It functions in the pathway cofactor biosynthesis; adenosylcobalamin biosynthesis. In terms of biological role, catalyzes amidations at positions B, D, E, and G on adenosylcobyrinic A,C-diamide. NH(2) groups are provided by glutamine, and one molecule of ATP is hydrogenolyzed for each amidation. The protein is Cobyric acid synthase of Methylobacterium nodulans (strain LMG 21967 / CNCM I-2342 / ORS 2060).